The chain runs to 183 residues: Microfibrillar-associated protein 2 (183 aa).

Positions 1–16 (MRAACLFLLFMPGLLA) form a signal peptide, or 18. Gln-17 carries the post-translational modification Pyrrolidone carboxylic acid. Sulfotyrosine is present on residues Tyr-46, Tyr-47, and Tyr-49. The segment at 52-92 (VSPRTPEEQFQSQQQVQQEVIPAPTPEPAAAGDLETEPTEP) is disordered. Low complexity predominate over residues 59-70 (EQFQSQQQVQQE). One can recognise a ShKT domain in the interval 153-183 (CRDKFSKCGVMAVSGLCQSVAASCARSCGGC). 3 cysteine pairs are disulfide-bonded: Cys-153–Cys-183, Cys-160–Cys-176, and Cys-169–Cys-180.

This sequence belongs to the MFAP family. In terms of assembly, forms a ternary complex with BGN and ELN. Interacts with FBN1 (via N-terminal domain) and FBN2. Post-translationally, forms intermolecular disulfide bonds either with other MAGP-1 molecules or with other components of the microfibrils. May form transglutaminase cross-links. In terms of processing, O-glycosylated.

It is found in the secreted. It localises to the extracellular space. The protein localises to the extracellular matrix. Functionally, component of the elastin-associated microfibrils. The polypeptide is Microfibrillar-associated protein 2 (Mfap2) (Mus musculus (Mouse)).